Reading from the N-terminus, the 167-residue chain is Lipoprotein signal peptidase (167 aa).

The next 3 membrane-spanning stretches (helical) occupy residues 8–28 (FFLL…YWIM), 61–81 (FSHW…LWLW), and 93–113 (FGLT…ICFY). Catalysis depends on residues Asp117 and Asp136. A helical membrane pass occupies residues 126 to 146 (IFYFAVFNLADTFITLGVIAI).

Belongs to the peptidase A8 family.

Its subcellular location is the cell inner membrane. The enzyme catalyses Release of signal peptides from bacterial membrane prolipoproteins. Hydrolyzes -Xaa-Yaa-Zaa-|-(S,diacylglyceryl)Cys-, in which Xaa is hydrophobic (preferably Leu), and Yaa (Ala or Ser) and Zaa (Gly or Ala) have small, neutral side chains.. Its pathway is protein modification; lipoprotein biosynthesis (signal peptide cleavage). In terms of biological role, this protein specifically catalyzes the removal of signal peptides from prolipoproteins. The polypeptide is Lipoprotein signal peptidase (Bartonella quintana (strain Toulouse) (Rochalimaea quintana)).